We begin with the raw amino-acid sequence, 314 residues long: uncharacterized protein (314 aa).

The span at 68-91 (EKKKKSSSFEKRDKRRVQLKEKSP) shows a compositional bias: basic and acidic residues. Disordered regions lie at residues 68 to 97 (EKKK…TPRN) and 141 to 164 (MDVQ…RPAS). A compositionally biased stretch (polar residues) spans 144 to 157 (QSPSTMSTSKNNVR).

Its subcellular location is the mitochondrion. This is an uncharacterized protein from Schizosaccharomyces pombe (strain 972 / ATCC 24843) (Fission yeast).